We begin with the raw amino-acid sequence, 142 residues long: Serine/threonine-protein kinase BtrW (142 aa).

It belongs to the anti-sigma-factor family. In terms of assembly, probably able to multimerize; interacts with BtrV.

The catalysed reaction is L-seryl-[protein] + ATP = O-phospho-L-seryl-[protein] + ADP + H(+). The enzyme catalyses L-threonyl-[protein] + ATP = O-phospho-L-threonyl-[protein] + ADP + H(+). Possible negative regulator of sigma-B activity. Phosphorylates and inactivates its specific antagonist protein, BtrV. Upon phosphorylation of BtrV, BtrW is released and binds to an unknown partner(s) that might be sigma-B, thereby blocking its ability to form a complex with its partner (possibly an RNA polymerase holoenzyme (E-sigma-B)). Involved in type III secretion system (T3SS). Phosphorylates BtrV. This is Serine/threonine-protein kinase BtrW (btrW) from Bordetella bronchiseptica (strain ATCC BAA-588 / NCTC 13252 / RB50) (Alcaligenes bronchisepticus).